We begin with the raw amino-acid sequence, 312 residues long: UDP-N-acetylenolpyruvoylglucosamine reductase (312 aa).

An FAD-binding PCMH-type domain is found at 37-205 (VGGPADALVV…VCAEFALCPG (169 aa)). Arg185 is an active-site residue. The active-site Proton donor is the Ser234. Residue Glu304 is part of the active site.

This sequence belongs to the MurB family. The cofactor is FAD.

It localises to the cytoplasm. The catalysed reaction is UDP-N-acetyl-alpha-D-muramate + NADP(+) = UDP-N-acetyl-3-O-(1-carboxyvinyl)-alpha-D-glucosamine + NADPH + H(+). It functions in the pathway cell wall biogenesis; peptidoglycan biosynthesis. Functionally, cell wall formation. In Syntrophus aciditrophicus (strain SB), this protein is UDP-N-acetylenolpyruvoylglucosamine reductase.